A 252-amino-acid polypeptide reads, in one-letter code: Protein A47 (252 aa).

The protein belongs to the orthopoxvirus A47 protein family.

The sequence is that of Protein A47 from Vaccinia virus (strain Western Reserve) (VACV).